The chain runs to 149 residues: MERTFIAIKPDGVQRGLVGSIIQRLESRGYQLVGLKLVQVSQELAEAHYAEHRERPFFPGLVKFITSGPVVAMVWQGKGVIAAARKLIGKTNPLDAEPGTIRGDFGIDIGRNLVHGSDGPETAQREIALWFQESELVNWTPATQSWIYE.

ATP contacts are provided by lysine 9, phenylalanine 57, arginine 85, threonine 91, arginine 102, and asparagine 112. The active-site Pros-phosphohistidine intermediate is the histidine 115.

Belongs to the NDK family. In terms of assembly, homotetramer. Mg(2+) serves as cofactor.

The protein localises to the cytoplasm. The catalysed reaction is dZDP + ATP = dZTP + ADP. It carries out the reaction a 2'-deoxyribonucleoside 5'-diphosphate + ATP = a 2'-deoxyribonucleoside 5'-triphosphate + ADP. The enzyme catalyses a ribonucleoside 5'-diphosphate + ATP = a ribonucleoside 5'-triphosphate + ADP. It functions in the pathway purine metabolism. Functionally, major role in the synthesis of nucleoside triphosphates other than ATP. The ATP gamma phosphate is transferred to the NDP beta phosphate via a ping-pong mechanism, using a phosphorylated active-site intermediate. In terms of biological role, (Microbial infection) Catalyzes the phosphorylation of dZDP to dZTP, when the bacterium is infected by a phage that produces the substrate for the synthesis of dZTP (2- amino-2'-deoxyadenosine 5'-triphosphate), which is then used by the phage as a DNA polymerase substrate. The sequence is that of Nucleoside diphosphate kinase from Synechococcus sp. (strain JA-3-3Ab) (Cyanobacteria bacterium Yellowstone A-Prime).